We begin with the raw amino-acid sequence, 103 residues long: Histone H4 (103 aa).

Over residues 1 to 14 (MSGRGKGGKGLGKG) the composition is skewed to gly residues. The disordered stretch occupies residues 1 to 20 (MSGRGKGGKGLGKGGAKRHR). K6 carries the post-translational modification N6-acetyl-N6-methyllysine; alternate. Residues K6, K9, and K13 each carry the N6-methyllysine; alternate modification. K13 carries the N6-acetyl-N6-methyllysine; alternate modification. A DNA-binding region spans residues 17-21 (KRHRK). At K92 the chain carries N6-glutaryllysine.

This sequence belongs to the histone H4 family. In terms of assembly, the nucleosome is a histone octamer containing two molecules each of H2A, H2B, H3 and H4 assembled in one H3-H4 heterotetramer and two H2A-H2B heterodimers. The octamer wraps approximately 147 bp of DNA. Post-translationally, glutarylation at Lys-92 (H4K91glu) destabilizes nucleosomes by promoting dissociation of the H2A-H2B dimers from nucleosomes.

It localises to the nucleus. Its subcellular location is the chromosome. Core component of nucleosome. Nucleosomes wrap and compact DNA into chromatin, limiting DNA accessibility to the cellular machineries which require DNA as a template. Histones thereby play a central role in transcription regulation, DNA repair, DNA replication and chromosomal stability. DNA accessibility is regulated via a complex set of post-translational modifications of histones, also called histone code, and nucleosome remodeling. This Phanerodontia chrysosporium (White-rot fungus) protein is Histone H4 (H4.1).